The primary structure comprises 209 residues: Large ribosomal subunit protein uL3 (209 aa).

The protein belongs to the universal ribosomal protein uL3 family. Part of the 50S ribosomal subunit. Forms a cluster with proteins L14 and L19.

Its function is as follows. One of the primary rRNA binding proteins, it binds directly near the 3'-end of the 23S rRNA, where it nucleates assembly of the 50S subunit. The chain is Large ribosomal subunit protein uL3 from Desulfotalea psychrophila (strain LSv54 / DSM 12343).